The chain runs to 439 residues: Ribosomal protein uS12 methylthiotransferase RimO (439 aa).

Residues 4–114 enclose the MTTase N-terminal domain; the sequence is PKVGFVSLGC…VVRAVHGVAP (111 aa). Positions 13, 49, 78, 147, 151, and 154 each coordinate [4Fe-4S] cluster. Positions 133 to 370 constitute a Radical SAM core domain; sequence LTPRHYAYLK…MEHQQAISTA (238 aa). One can recognise a TRAM domain in the interval 373–439; it reads STRVGREIDV…EYDLWGERIA (67 aa).

Belongs to the methylthiotransferase family. RimO subfamily. [4Fe-4S] cluster serves as cofactor.

It is found in the cytoplasm. The catalysed reaction is L-aspartate(89)-[ribosomal protein uS12]-hydrogen + (sulfur carrier)-SH + AH2 + 2 S-adenosyl-L-methionine = 3-methylsulfanyl-L-aspartate(89)-[ribosomal protein uS12]-hydrogen + (sulfur carrier)-H + 5'-deoxyadenosine + L-methionine + A + S-adenosyl-L-homocysteine + 2 H(+). In terms of biological role, catalyzes the methylthiolation of an aspartic acid residue of ribosomal protein uS12. This is Ribosomal protein uS12 methylthiotransferase RimO from Bordetella parapertussis (strain 12822 / ATCC BAA-587 / NCTC 13253).